We begin with the raw amino-acid sequence, 386 residues long: MSSTAVPRPKPWETSASLEEPQRNAQSLSAMMTSNQQDSRPTEESNNSNSASESAPEVLPRPAALNSSGTYGESNTIPGIYGNSNYGIPYDNNPYSMNSIYGNSIGRYGYGGSYYGNNYGSFYGGGYGAGAGYGMNNGSGLGESTKATFQLIESLIGAVTGFAQMLESTYMATHNSFFTMISVAEQFGNLKEMLGSFFGIFAIMKFLKKILYRATKGRLGIPPKNFAESEGSKNKLIEDFQKFNDSGTINSNEKATRRKISWKPLLFFLMAVFGFPYLLNKFITKLQTSGTIRASQGNGSEPIDPSKLEFARALYDFVPENPEMEVALKKGDLMAILSKKDPLGRDSDWWKVRTKNGNIGYIPYNYIEIIKRRKKIEHVDDETRTH.

A disordered region spans residues 1-76 (MSSTAVPRPK…SSGTYGESNT (76 aa)). Topologically, residues 1–263 (MSSTAVPRPK…KATRRKISWK (263 aa)) are lumenal. Residues 23–39 (RNAQSLSAMMTSNQQDS) show a composition bias toward polar residues. The span at 44 to 55 (ESNNSNSASESA) shows a compositional bias: low complexity. Over residues 65–76 (LNSSGTYGESNT) the composition is skewed to polar residues. A helical membrane pass occupies residues 264–280 (PLLFFLMAVFGFPYLLN). Over 281–386 (KFITKLQTSG…EHVDDETRTH (106 aa)) the chain is Cytoplasmic. One can recognise an SH3 domain in the interval 306–372 (SKLEFARALY…PYNYIEIIKR (67 aa)).

Belongs to the peroxin-13 family. As to quaternary structure, interacts (via SH3 domain) with PEX14 (via SH3-binding motif); forming the PEX13-PEX14 docking complex.

Its subcellular location is the peroxisome membrane. Its function is as follows. Component of the PEX13-PEX14 docking complex, a translocon channel that specifically mediates the import of peroxisomal cargo proteins bound to PEX5 or PEX21 receptors. The PEX13-PEX14 docking complex forms a large import pore which can be opened to a diameter of about 9 nm. Mechanistically, PEX5 (or PEX21) receptor along with cargo proteins associates with the PEX14 subunit of the PEX13-PEX14 docking complex in the cytosol, leading to the insertion of the receptor into the organelle membrane with the concomitant translocation of the cargo into the peroxisome matrix. The polypeptide is Peroxisomal membrane protein PEX13 (Saccharomyces cerevisiae (strain ATCC 204508 / S288c) (Baker's yeast)).